The sequence spans 407 residues: Arylacetamide deacetylase-like 4 family member 1 (407 aa).

The Cytoplasmic segment spans residues 1–4 (MLYL). The chain crosses the membrane as a helical; Signal-anchor for type II membrane protein span at residues 5–25 (VGFLLATVCLLVLGVNVWVLI). The Lumenal portion of the chain corresponds to 26-407 (DHFLTIDVPP…NAVVSYIKDL (382 aa)). Positions 119-121 (HGG) match the Involved in the stabilization of the negatively charged intermediate by the formation of the oxyanion hole motif. N-linked (GlcNAc...) asparagine glycosylation occurs at Asn-168. Active-site residues include Ser-193, Asp-347, and His-377.

This sequence belongs to the 'GDXG' lipolytic enzyme family.

The protein resides in the membrane. This chain is Arylacetamide deacetylase-like 4 family member 1, found in Mus musculus (Mouse).